An 87-amino-acid polypeptide reads, in one-letter code: Small ribosomal subunit protein uS15c (87 aa).

The protein belongs to the universal ribosomal protein uS15 family. In terms of assembly, part of the 30S ribosomal subunit.

It is found in the plastid. The protein localises to the chloroplast. In Oenothera biennis (German evening primrose), this protein is Small ribosomal subunit protein uS15c (rps15).